We begin with the raw amino-acid sequence, 195 residues long: uncharacterized protein (195 aa).

Positions 1–20 (MLKFRLILTVLTVLLITVNG) are cleaved as a signal peptide. The segment at 26–195 (IENKSSTSSS…LHNQYPPQQN (170 aa)) is disordered. Asn28 carries an N-linked (GlcNAc...) asparagine glycan. 2 stretches are compositionally biased toward low complexity: residues 29–43 (KSST…SKPS) and 74–104 (QSKT…GGNQ). Composition is skewed to polar residues over residues 112–123 (DPYQTGSYQGPY) and 151–176 (PKNT…NNGP).

In terms of tissue distribution, component of the acid-soluble organic matrix of calcified layers of the shell (at protein level).

The protein resides in the secreted. This is an uncharacterized protein from Lottia gigantea (Giant owl limpet).